Here is a 601-residue protein sequence, read N- to C-terminus: MSESIQDQDHEKTTIIEKTRRFVLSIFTKDFWIGDYDYSFLLPAIPFTKQKPKSPPFFSLNAKVPVLLALLLGFQHALAMVGGVTSPPRIIAASANLTTEQTNYLVSAGLISSGIMTLIQIARVHIPKTKYYIGTGMLSVLGISFTSVSVAPKVLSQMYENGYCPKDENGTKLPCPDGYGAFLATACVCSLLEIFMSFIPPRILKRLFPPIVTGPVVLLIGTSLISSGLNDWAGGEGSCTGRPTEAEAPGYSLCPSDTSPHALGWGSAQFIGLGFSVFATIIIIERFGPPLMKTTSVVLGLVVGMIISAATGYWDHSIIDAAPVVTFNWVHTFRLRIYGPAVLPMLALYIVNMMEAIGDIGATSDVSMLEVDGPAFDARVQGGILGDGLASLIASLMTTTPLTTFAQNNGVISLTKCANRRAGFFCAVILFFMGLFAKFAAVFVAIPSPVLGGMTTFLFSSVAVSGIAIISQIPFNRRNRFILTASMTLGMGAILVPDWFTYFFEYSGPNKALVGFLDAITLVMENGFAIGAFISIFLNLILPYEFDPDLTNDSPGLSTTNGVNNGIVEVRGIDPNDSLSNTDTEYANENKKDEVDVDKVV.

The next 12 membrane-spanning stretches (helical) occupy residues 64 to 84 (VPVLLALLLGFQHALAMVGGV), 102 to 122 (TNYLVSAGLISSGIMTLIQIA), 131 to 151 (YYIGTGMLSVLGISFTSVSVA), 179 to 199 (YGAFLATACVCSLLEIFMSFI), 207 to 227 (LFPPIVTGPVVLLIGTSLISS), 264 to 284 (GWGSAQFIGLGFSVFATIIII), 294 to 314 (TTSVVLGLVVGMIISAATGYW), 337 to 357 (IYGPAVLPMLALYIVNMMEAI), 424 to 444 (FFCAVILFFMGLFAKFAAVFV), 450 to 470 (VLGGMTTFLFSSVAVSGIAII), 481 to 501 (FILTASMTLGMGAILVPDWFT), and 522 to 542 (LVMENGFAIGAFISIFLNLIL).

It belongs to the nucleobase:cation symporter-2 (NCS2) (TC 2.A.40) family.

The protein localises to the vacuole membrane. The sequence is that of Putative purine permease C1399.01c from Schizosaccharomyces pombe (strain 972 / ATCC 24843) (Fission yeast).